The primary structure comprises 208 residues: Apoptosis inhibitor 193R (208 aa).

The tract at residues 1–25 (MDTCGIYNSDNEEFSQENDGENDGG) is disordered. Acidic residues predominate over residues 10 to 23 (DNEEFSQENDGEND). A BIR repeat occupies 37–108 (YDERLNSFQN…QDLKINCLFV (72 aa)). Zn(2+) is bound by residues Cys-74, Cys-77, His-94, and Cys-105. 3 consecutive repeat copies span residues 134–139 (NQDLDH), 140–145 (NQDLDH), and 146–151 (NQDLDQ). A 3 X 6 AA tandem repeats region spans residues 134-151 (NQDLDHNQDLDHNQDLDQ). The segment at 163-197 (CKICFTNKITKVLIPCGHSSCYECVFKLQTCPICK) adopts an RING-type zinc-finger fold.

The protein belongs to the IIV-6 193R family.

Plays a role early in infection by preventing host cell apoptosis. This Invertebrate iridescent virus 6 (IIV-6) protein is Apoptosis inhibitor 193R.